A 37-amino-acid chain; its full sequence is Translationally-controlled tumor protein homolog (37 aa).

A TCTP domain is found at M1–E37.

The protein belongs to the TCTP family. In terms of assembly, monomer.

The protein localises to the cytoplasm. Binds calcium; exact function not known. In Trypanosoma brucei brucei, this protein is Translationally-controlled tumor protein homolog.